The primary structure comprises 239 residues: tRNA (guanine-N(7)-)-methyltransferase (239 aa).

Residues glutamate 68, glutamate 93, aspartate 120, and aspartate 143 each coordinate S-adenosyl-L-methionine. The active site involves aspartate 143. Substrate-binding positions include lysine 147, aspartate 180, and 217–220; that span reads TKFE.

Belongs to the class I-like SAM-binding methyltransferase superfamily. TrmB family.

The enzyme catalyses guanosine(46) in tRNA + S-adenosyl-L-methionine = N(7)-methylguanosine(46) in tRNA + S-adenosyl-L-homocysteine. It participates in tRNA modification; N(7)-methylguanine-tRNA biosynthesis. Catalyzes the formation of N(7)-methylguanine at position 46 (m7G46) in tRNA. The protein is tRNA (guanine-N(7)-)-methyltransferase of Vibrio parahaemolyticus serotype O3:K6 (strain RIMD 2210633).